Consider the following 54-residue polypeptide: MQELVTLECTEARKEGKPVSRYLTTRNKKTVTERIEKKKYNPHLKRHTLHKEIK.

Belongs to the bacterial ribosomal protein bL33 family.

This chain is Large ribosomal subunit protein bL33, found in Opitutus terrae (strain DSM 11246 / JCM 15787 / PB90-1).